The chain runs to 379 residues: Cytochrome b (379 aa).

A run of 4 helical transmembrane segments spans residues 33 to 53 (LGSLLGTCLIMQILTGLFLAM), 77 to 98 (WTIRHLHANGASMFFMCLYLHI), 113 to 133 (WNTGVMLLLTVMATAFMGYVL), and 178 to 198 (FFTLHFIAPFIILALVLTHLL). Residues histidine 83 and histidine 97 each contribute to the heme b site. 2 residues coordinate heme b: histidine 182 and histidine 196. Histidine 201 is a binding site for a ubiquinone. 4 consecutive transmembrane segments (helical) span residues 226–246 (IKDILGLLIMILTTLALTLLH), 288–308 (LGGVLTLICSILVLVIIPMTH), 320–340 (ISQCLFWILTADLLILTWIGG), and 347–367 (FTTIGLLASILYFTTILILTP).

The protein belongs to the cytochrome b family. In terms of assembly, the cytochrome bc1 complex contains 11 subunits: 3 respiratory subunits (MT-CYB, CYC1 and UQCRFS1), 2 core proteins (UQCRC1 and UQCRC2) and 6 low-molecular weight proteins (UQCRH/QCR6, UQCRB/QCR7, UQCRQ/QCR8, UQCR10/QCR9, UQCR11/QCR10 and a cleavage product of UQCRFS1). This cytochrome bc1 complex then forms a dimer. It depends on heme b as a cofactor.

Its subcellular location is the mitochondrion inner membrane. Component of the ubiquinol-cytochrome c reductase complex (complex III or cytochrome b-c1 complex) that is part of the mitochondrial respiratory chain. The b-c1 complex mediates electron transfer from ubiquinol to cytochrome c. Contributes to the generation of a proton gradient across the mitochondrial membrane that is then used for ATP synthesis. This chain is Cytochrome b (MT-CYB), found in Bradypus tridactylus (Pale-throated three-toed sloth).